A 105-amino-acid chain; its full sequence is uncharacterized protein (105 aa).

A helical membrane pass occupies residues 8-28 (FMTAGIIIALIIAVLAPFLAS). The tract at residues 32–53 (DGLESTAEKVMPNPETEPVLES) is disordered. Residues 72–92 (VSMVIGTILVLAIAYGVGAVF) traverse the membrane as a helical segment.

This sequence to M.jannaschii MJ1570.

It is found in the cell membrane. This is an uncharacterized protein from Methanothermobacter thermautotrophicus (strain ATCC 29096 / DSM 1053 / JCM 10044 / NBRC 100330 / Delta H) (Methanobacterium thermoautotrophicum).